We begin with the raw amino-acid sequence, 160 residues long: Small ribosomal subunit protein bS16 (160 aa).

The disordered stretch occupies residues 115–139 (GGPTTEATRPKKKVSAKKAAKAVES). Basic residues predominate over residues 124 to 134 (PKKKVSAKKAA).

The protein belongs to the bacterial ribosomal protein bS16 family.

This is Small ribosomal subunit protein bS16 from Mycobacterium leprae (strain Br4923).